The following is a 915-amino-acid chain: Isoleucine--tRNA ligase (915 aa).

The 'HIGH' region signature appears at 64–74 (PYANGNFHVGH). Glu-557 contributes to the L-isoleucyl-5'-AMP binding site. The 'KMSKS' region signature appears at 598 to 602 (AMSKS). Residue Lys-601 participates in ATP binding. Cys-887, Cys-890, Cys-902, and Cys-905 together coordinate Zn(2+).

It belongs to the class-I aminoacyl-tRNA synthetase family. IleS type 1 subfamily. As to quaternary structure, monomer. Requires Zn(2+) as cofactor.

The protein localises to the cytoplasm. The enzyme catalyses tRNA(Ile) + L-isoleucine + ATP = L-isoleucyl-tRNA(Ile) + AMP + diphosphate. In terms of biological role, catalyzes the attachment of isoleucine to tRNA(Ile). As IleRS can inadvertently accommodate and process structurally similar amino acids such as valine, to avoid such errors it has two additional distinct tRNA(Ile)-dependent editing activities. One activity is designated as 'pretransfer' editing and involves the hydrolysis of activated Val-AMP. The other activity is designated 'posttransfer' editing and involves deacylation of mischarged Val-tRNA(Ile). The protein is Isoleucine--tRNA ligase of Leptospira biflexa serovar Patoc (strain Patoc 1 / ATCC 23582 / Paris).